The primary structure comprises 336 residues: tRNA-modifying protein YgfZ (336 aa).

Trp28 and Trp191 together coordinate folate.

Belongs to the tRNA-modifying YgfZ family.

Its subcellular location is the cytoplasm. Its function is as follows. Folate-binding protein involved in regulating the level of ATP-DnaA and in the modification of some tRNAs. It is probably a key factor in regulatory networks that act via tRNA modification, such as initiation of chromosomal replication. The chain is tRNA-modifying protein YgfZ from Hamiltonella defensa subsp. Acyrthosiphon pisum (strain 5AT).